Reading from the N-terminus, the 1381-residue chain is DNA-directed RNA polymerase subunit beta'' (1381 aa).

Zn(2+)-binding residues include Cys-220, Cys-293, Cys-300, and Cys-303.

The protein belongs to the RNA polymerase beta' chain family. RpoC2 subfamily. As to quaternary structure, in plastids the minimal PEP RNA polymerase catalytic core is composed of four subunits: alpha, beta, beta', and beta''. When a (nuclear-encoded) sigma factor is associated with the core the holoenzyme is formed, which can initiate transcription. Zn(2+) is required as a cofactor.

The protein resides in the plastid. The protein localises to the chloroplast. The catalysed reaction is RNA(n) + a ribonucleoside 5'-triphosphate = RNA(n+1) + diphosphate. DNA-dependent RNA polymerase catalyzes the transcription of DNA into RNA using the four ribonucleoside triphosphates as substrates. In Draba nemorosa (Woodland whitlowgrass), this protein is DNA-directed RNA polymerase subunit beta''.